A 577-amino-acid polypeptide reads, in one-letter code: Arginine--tRNA ligase (577 aa).

The 'HIGH' region signature appears at 122–132 (PNVAKEMHVGH).

It belongs to the class-I aminoacyl-tRNA synthetase family. In terms of assembly, monomer.

It is found in the cytoplasm. The catalysed reaction is tRNA(Arg) + L-arginine + ATP = L-arginyl-tRNA(Arg) + AMP + diphosphate. The sequence is that of Arginine--tRNA ligase from Shigella flexneri serotype 5b (strain 8401).